Here is a 325-residue protein sequence, read N- to C-terminus: GMP reductase (325 aa).

Cysteine 174 functions as the Thioimidate intermediate in the catalytic mechanism. Residue 203–226 (LIADGGIRTHGDIAKSIRFGASMV) coordinates NADP(+).

It belongs to the IMPDH/GMPR family. GuaC type 2 subfamily.

The catalysed reaction is IMP + NH4(+) + NADP(+) = GMP + NADPH + 2 H(+). Functionally, catalyzes the irreversible NADPH-dependent deamination of GMP to IMP. It functions in the conversion of nucleobase, nucleoside and nucleotide derivatives of G to A nucleotides, and in maintaining the intracellular balance of A and G nucleotides. The sequence is that of GMP reductase from Staphylococcus aureus (strain JH9).